Here is a 182-residue protein sequence, read N- to C-terminus: Large ribosomal subunit protein uL5 (182 aa).

The protein belongs to the universal ribosomal protein uL5 family. As to quaternary structure, part of the 50S ribosomal subunit; part of the 5S rRNA/L5/L18/L25 subcomplex. Contacts the 5S rRNA and the P site tRNA. Forms a bridge to the 30S subunit in the 70S ribosome.

Functionally, this is one of the proteins that bind and probably mediate the attachment of the 5S RNA into the large ribosomal subunit, where it forms part of the central protuberance. In the 70S ribosome it contacts protein S13 of the 30S subunit (bridge B1b), connecting the 2 subunits; this bridge is implicated in subunit movement. Contacts the P site tRNA; the 5S rRNA and some of its associated proteins might help stabilize positioning of ribosome-bound tRNAs. The polypeptide is Large ribosomal subunit protein uL5 (Coxiella burnetii (strain CbuK_Q154) (Coxiella burnetii (strain Q154))).